The primary structure comprises 224 residues: Small ribosomal subunit protein uS3 (224 aa).

The 69-residue stretch at 39–107 folds into the KH type-2 domain; the sequence is IREFLKKKPS…DVWVEIAEVK (69 aa).

Belongs to the universal ribosomal protein uS3 family. As to quaternary structure, part of the 30S ribosomal subunit. Forms a tight complex with proteins S10 and S14.

Functionally, binds the lower part of the 30S subunit head. Binds mRNA in the 70S ribosome, positioning it for translation. The sequence is that of Small ribosomal subunit protein uS3 from Chlamydia trachomatis serovar L2 (strain ATCC VR-902B / DSM 19102 / 434/Bu).